A 301-amino-acid polypeptide reads, in one-letter code: Mating type protein mtA-1 (301 aa).

Residues 49 to 104 (APKKKVNGFMGFRSYYSSLFSQFPQKARSPFMTILWQHDPFHNEWDFMCSVYSSIR) constitute a DNA-binding region (alpha box).

The protein belongs to the MATALPHA1 family.

Its subcellular location is the nucleus. Functionally, mating type proteins are sequence specific DNA-binding proteins that act as master switches in fungal differentiation by controlling gene expression in a cell type-specific fashion. Transcriptional activator that induces the transcription of alpha-specific genes. This chain is Mating type protein mtA-1 (MTA1), found in Sordaria fimicola.